We begin with the raw amino-acid sequence, 197 residues long: Segregation and condensation protein B (197 aa).

The protein belongs to the ScpB family. In terms of assembly, homodimer. Homodimerization may be required to stabilize the binding of ScpA to the Smc head domains. Component of a cohesin-like complex composed of ScpA, ScpB and the Smc homodimer, in which ScpA and ScpB bind to the head domain of Smc. The presence of the three proteins is required for the association of the complex with DNA.

The protein resides in the cytoplasm. In terms of biological role, participates in chromosomal partition during cell division. May act via the formation of a condensin-like complex containing Smc and ScpA that pull DNA away from mid-cell into both cell halves. This chain is Segregation and condensation protein B, found in Bacillus licheniformis (strain ATCC 14580 / DSM 13 / JCM 2505 / CCUG 7422 / NBRC 12200 / NCIMB 9375 / NCTC 10341 / NRRL NRS-1264 / Gibson 46).